We begin with the raw amino-acid sequence, 208 residues long: MTDSNNQSPNKKTSGSSSAPPAADGRQENRRSRGEKRGGRRDRRGQERDSEWQERVVQIRRVSKTVKGGKKMSFRAIVVVGNEKGQVGVGVGKAGDVIGAVRKGVADGKKHLVRVPLTRNSSIPTLSNGRDGAASVLIRPAAPGTGVIAGGSIRTVLELAGIKNVLAKRLGSKTPLNNARAAMVALSELRTHKATAKERGISLEQIYS.

Polar residues predominate over residues 1 to 15 (MTDSNNQSPNKKTSG). Residues 1 to 54 (MTDSNNQSPNKKTSGSSSAPPAADGRQENRRSRGEKRGGRRDRRGQERDSEWQE) form a disordered region. Composition is skewed to basic and acidic residues over residues 25-37 (GRQE…GEKR) and 44-54 (RGQERDSEWQE). In terms of domain architecture, S5 DRBM spans 52-115 (WQERVVQIRR…ADGKKHLVRV (64 aa)).

Belongs to the universal ribosomal protein uS5 family. Part of the 30S ribosomal subunit. Contacts proteins S4 and S8.

In terms of biological role, with S4 and S12 plays an important role in translational accuracy. Its function is as follows. Located at the back of the 30S subunit body where it stabilizes the conformation of the head with respect to the body. This Prochlorococcus marinus (strain NATL2A) protein is Small ribosomal subunit protein uS5.